Consider the following 176-residue polypeptide: Large ribosomal subunit protein uL6 (176 aa).

This sequence belongs to the universal ribosomal protein uL6 family. In terms of assembly, part of the 50S ribosomal subunit.

Its function is as follows. This protein binds to the 23S rRNA, and is important in its secondary structure. It is located near the subunit interface in the base of the L7/L12 stalk, and near the tRNA binding site of the peptidyltransferase center. The protein is Large ribosomal subunit protein uL6 of Lacticaseibacillus paracasei (strain ATCC 334 / BCRC 17002 / CCUG 31169 / CIP 107868 / KCTC 3260 / NRRL B-441) (Lactobacillus paracasei).